Reading from the N-terminus, the 145-residue chain is Ribonuclease P protein component (145 aa).

A disordered region spans residues P121–L145. Over residues H134–L145 the composition is skewed to polar residues.

Belongs to the RnpA family. Consists of a catalytic RNA component (M1 or rnpB) and a protein subunit.

The catalysed reaction is Endonucleolytic cleavage of RNA, removing 5'-extranucleotides from tRNA precursor.. In terms of biological role, RNaseP catalyzes the removal of the 5'-leader sequence from pre-tRNA to produce the mature 5'-terminus. It can also cleave other RNA substrates such as 4.5S RNA. The protein component plays an auxiliary but essential role in vivo by binding to the 5'-leader sequence and broadening the substrate specificity of the ribozyme. This Xanthomonas axonopodis pv. citri (strain 306) protein is Ribonuclease P protein component.